Consider the following 314-residue polypeptide: Mycothiol acetyltransferase (314 aa).

N-acetyltransferase domains lie at Ala-18–Ala-156 and Ile-168–Leu-314. Glu-38 contributes to the 1D-myo-inositol 2-(L-cysteinylamino)-2-deoxy-alpha-D-glucopyranoside binding site. An acetyl-CoA-binding site is contributed by Val-92–Val-94. Residues Glu-195, Lys-234, and Glu-248 each coordinate 1D-myo-inositol 2-(L-cysteinylamino)-2-deoxy-alpha-D-glucopyranoside. Acetyl-CoA is bound by residues Val-252–Leu-254 and Gln-259–Arg-265. Tyr-286 provides a ligand contact to 1D-myo-inositol 2-(L-cysteinylamino)-2-deoxy-alpha-D-glucopyranoside.

This sequence belongs to the acetyltransferase family. MshD subfamily. In terms of assembly, monomer.

It carries out the reaction 1D-myo-inositol 2-(L-cysteinylamino)-2-deoxy-alpha-D-glucopyranoside + acetyl-CoA = mycothiol + CoA + H(+). Its function is as follows. Catalyzes the transfer of acetyl from acetyl-CoA to desacetylmycothiol (Cys-GlcN-Ins) to form mycothiol. The polypeptide is Mycothiol acetyltransferase (Catenulispora acidiphila (strain DSM 44928 / JCM 14897 / NBRC 102108 / NRRL B-24433 / ID139908)).